Reading from the N-terminus, the 230-residue chain is Urease accessory protein UreF (230 aa).

It belongs to the UreF family. UreD, UreF and UreG form a complex that acts as a GTP-hydrolysis-dependent molecular chaperone, activating the urease apoprotein by helping to assemble the nickel containing metallocenter of UreC. The UreE protein probably delivers the nickel.

The protein localises to the cytoplasm. Functionally, required for maturation of urease via the functional incorporation of the urease nickel metallocenter. The chain is Urease accessory protein UreF from Cupriavidus taiwanensis (strain DSM 17343 / BCRC 17206 / CCUG 44338 / CIP 107171 / LMG 19424 / R1) (Ralstonia taiwanensis (strain LMG 19424)).